Consider the following 210-residue polypeptide: MAGALKKTMIYLGLADGDEYDEQPRAAEREAAPRHEVVEARRPAEPDTDPHMEAVRPAAVRDPEPAERPEPVTPSGSTAAEPVEPRRPARPEPVDPGYRAPVTPIKRAAASSAEGASVHTLSTVHPRSYNDAKAIGESFRSGVPVIMNVTDLGENEAKRLVDFAAGLVFGLHGSISRITSKVFLLTPATVDVVGAEQGESSVADSPFDGD.

The disordered stretch occupies residues 13–101 (GLADGDEYDE…EPVDPGYRAP (89 aa)). Basic and acidic residues-rich tracts occupy residues 22 to 70 (EQPR…ERPE) and 83 to 93 (VEPRRPARPEP).

This sequence belongs to the SepF family. In terms of assembly, homodimer. Interacts with FtsZ.

It is found in the cytoplasm. Cell division protein that is part of the divisome complex and is recruited early to the Z-ring. Probably stimulates Z-ring formation, perhaps through the cross-linking of FtsZ protofilaments. Its function overlaps with FtsA. The chain is Cell division protein SepF from Micrococcus luteus (strain ATCC 4698 / DSM 20030 / JCM 1464 / CCM 169 / CCUG 5858 / IAM 1056 / NBRC 3333 / NCIMB 9278 / NCTC 2665 / VKM Ac-2230) (Micrococcus lysodeikticus).